A 308-amino-acid chain; its full sequence is Tyrosine recombinase XerD (308 aa).

The Core-binding (CB) domain occupies Pro-13–Leu-97. In terms of domain architecture, Tyr recombinase spans Arg-118–Ala-302. Catalysis depends on residues Arg-158, Lys-183, His-254, Arg-257, and His-280. Tyr-289 serves as the catalytic O-(3'-phospho-DNA)-tyrosine intermediate.

This sequence belongs to the 'phage' integrase family. XerD subfamily. In terms of assembly, forms a cyclic heterotetrameric complex composed of two molecules of XerC and two molecules of XerD.

Its subcellular location is the cytoplasm. Site-specific tyrosine recombinase, which acts by catalyzing the cutting and rejoining of the recombining DNA molecules. The XerC-XerD complex is essential to convert dimers of the bacterial chromosome into monomers to permit their segregation at cell division. It also contributes to the segregational stability of plasmids. The sequence is that of Tyrosine recombinase XerD from Ralstonia nicotianae (strain ATCC BAA-1114 / GMI1000) (Ralstonia solanacearum).